We begin with the raw amino-acid sequence, 843 residues long: MALKAKKSLSAIFRFAMRNAAKTAEVEAKAVAGDSLISDTGPVSMSLIPDFLSSLKSPEDSSNIGQDFGEPALAGQVSSALDVKSIGYNLLRERNGEKVFPKNVLETLDLLSRKGCSSQKPKQASRGRMLTENYQNKQSEIMEKLAKGCVRKLGTETMFEVLTKMGKEAGEKEYNAMTKLCIQRARRSNDAEYALDQIGKAIEHLKEMRQLGFSIGEGAYGPFFKYLVDMEMVAEFQILKDFIKEACPESCGRLVYYEMLLWIQVNDEEKIHKLCNKVDDSGLSLSILQEYYLVALCEKDSKENFQKLLEIVDITTVSSPDALKSIFGYLGKSLLESVAMKLLWELRDCRKDGVETVSNLIFSYATCIPNSTVEDAIFKFNKLHEELDIVPSSTSYENLVSYLCGSNEVVTALDIVENMCEAGLVISANILHSLLQAIEQILEFNLVQRIYSIMSNKSVKPNSETFRKSINLCIRIKDFEGAYNMLGNLKNFNLAPNSSMYNSIMAGYFREKKVNSALKVLKEMKEADVKPDSVTFSYLINYCGEEATIAKYYKEMKQAGVEVNKHVYMSLVKAYASCGQFEKAKQVLMDLEVPAKDHNELKSVLISALASNGNITEALSIYEEMKKLRCPVEPKAILSLIENSDSNAELGTLVELTHELRDSKFWIDGFFKIIVFAVRNNRSSSILDLLEQTKNHLSKDDVGVEYWFEEVFKSIAETESSDVKVGLDLVSFMKEELELCPSRKCLDFLLHACVNAKDKQSALLVWEEYQCAELPYNVINYLRMYQVLVAAGDSKSAEAIVSKIPNDDKDVKCIIKESRIVFTPKLKKKKKKSKQKGLSLQAK.

7 PPR repeats span residues 392 to 426 (SSTS…GLVI), 427 to 461 (SANI…SVKP), 462 to 496 (NSET…NLAP), 497 to 531 (NSSM…DVKP), 532 to 562 (DSVT…AGVE), 564 to 594 (NKHV…LEVP), and 598 to 632 (HNEL…RCPV).

This sequence belongs to the PPR family. P subfamily.

It is found in the mitochondrion. The polypeptide is Pentatricopeptide repeat-containing protein At4g21880, mitochondrial (Arabidopsis thaliana (Mouse-ear cress)).